Reading from the N-terminus, the 360-residue chain is Phenylalanine--tRNA ligase alpha subunit (360 aa).

Position 260 (Glu260) interacts with Mg(2+).

This sequence belongs to the class-II aminoacyl-tRNA synthetase family. Phe-tRNA synthetase alpha subunit type 1 subfamily. Tetramer of two alpha and two beta subunits. Mg(2+) is required as a cofactor.

Its subcellular location is the cytoplasm. The catalysed reaction is tRNA(Phe) + L-phenylalanine + ATP = L-phenylalanyl-tRNA(Phe) + AMP + diphosphate + H(+). The polypeptide is Phenylalanine--tRNA ligase alpha subunit (Methylobacterium radiotolerans (strain ATCC 27329 / DSM 1819 / JCM 2831 / NBRC 15690 / NCIMB 10815 / 0-1)).